Consider the following 197-residue polypeptide: Phosphoheptose isomerase (197 aa).

Positions 34-196 (MVNCLLGGNK…DRTLFPQDEQ (163 aa)) constitute an SIS domain. Substrate is bound at residue 49 to 51 (NGG). Zn(2+)-binding residues include H58 and E62. Substrate is bound by residues E62, 91 to 92 (ND), 117 to 119 (STS), S122, and Q172. Q172 and H180 together coordinate Zn(2+).

It belongs to the SIS family. GmhA subfamily. Homotetramer. Requires Zn(2+) as cofactor.

Its subcellular location is the cytoplasm. It catalyses the reaction 2 D-sedoheptulose 7-phosphate = D-glycero-alpha-D-manno-heptose 7-phosphate + D-glycero-beta-D-manno-heptose 7-phosphate. Its pathway is carbohydrate biosynthesis; D-glycero-D-manno-heptose 7-phosphate biosynthesis; D-glycero-alpha-D-manno-heptose 7-phosphate and D-glycero-beta-D-manno-heptose 7-phosphate from sedoheptulose 7-phosphate: step 1/1. Catalyzes the isomerization of sedoheptulose 7-phosphate in D-glycero-D-manno-heptose 7-phosphate. The polypeptide is Phosphoheptose isomerase (Shewanella pealeana (strain ATCC 700345 / ANG-SQ1)).